Reading from the N-terminus, the 212-residue chain is Dephospho-CoA kinase (212 aa).

The DPCK domain maps to 6–211 (RLGLTGGIGS…LSCQPLSPNQ (206 aa)). An ATP-binding site is contributed by 14 to 19 (GSGKST).

It belongs to the CoaE family.

It is found in the cytoplasm. It carries out the reaction 3'-dephospho-CoA + ATP = ADP + CoA + H(+). The protein operates within cofactor biosynthesis; coenzyme A biosynthesis; CoA from (R)-pantothenate: step 5/5. In terms of biological role, catalyzes the phosphorylation of the 3'-hydroxyl group of dephosphocoenzyme A to form coenzyme A. This Albidiferax ferrireducens (strain ATCC BAA-621 / DSM 15236 / T118) (Rhodoferax ferrireducens) protein is Dephospho-CoA kinase.